A 209-amino-acid polypeptide reads, in one-letter code: Cerebral peptide 1 (209 aa).

Positions 1 to 20 (MLLAKISVVVLLLAIDGTSS) are cleaved as a signal peptide. A compositionally biased stretch (polar residues) spans 21–39 (SESTDNVVLSSSPDSQKAA). Positions 21 to 43 (SESTDNVVLSSSPDSQKAATSRH) are cleaved as a propeptide — connecting peptide 1. The tract at residues 21–56 (SESTDNVVLSSSPDSQKAATSRHKRAPGWGKRSSLN) is disordered. Position 49 is a tryptophan amide (W49). The propeptide at 53–77 (SSLNDEDLFADSDSAQELLDSVAAL) is connecting peptide 2. W83 and W105 each carry tryptophan amide. The interval 98–169 (EAKRAPGWGK…APGWGKRSGG (72 aa)) is disordered. Residues 109–122 (GQEIDVDEDGSEQE) constitute a propeptide, connecting peptide 4. W128, W135, W142, W149, W156, and W163 each carry tryptophan amide. Positions 167–191 (SGGDYCETLEKMVDAYIYKAVEVDS) are cleaved as a propeptide — connecting peptide 5. The cysteines at positions 172 and 197 are disulfide-linked.

As to quaternary structure, homodimer; disulfide-linked. In terms of tissue distribution, cerebral peptide 1 is expressed in the cerebral, pedal and buccal ganglia and B1 and B2 neurons. APGW-amide is expressed in buccal ganglia and several neurons.

The protein localises to the secreted. In terms of biological role, may function as a peptide transmitter. In Aplysia californica (California sea hare), this protein is Cerebral peptide 1.